An 821-amino-acid chain; its full sequence is Phenylalanine--tRNA ligase beta subunit (821 aa).

A tRNA-binding domain is found at 39–149; it reads SENVKGIVLG…EDIALNHNLG (111 aa). The 94-residue stretch at 414–507 folds into the B5 domain; it reads LKKILIPLRR…RLIGYDMFDL (94 aa). 4 residues coordinate Mg(2+): Asp485, Asp491, Glu494, and Glu495. The FDX-ACB domain occupies 727–820; sequence PTVPKMERDI…IEKKFSTKLR (94 aa).

Belongs to the phenylalanyl-tRNA synthetase beta subunit family. Type 1 subfamily. Tetramer of two alpha and two beta subunits. Mg(2+) serves as cofactor.

It is found in the cytoplasm. The enzyme catalyses tRNA(Phe) + L-phenylalanine + ATP = L-phenylalanyl-tRNA(Phe) + AMP + diphosphate + H(+). This chain is Phenylalanine--tRNA ligase beta subunit, found in Prochlorococcus marinus subsp. pastoris (strain CCMP1986 / NIES-2087 / MED4).